Here is a 123-residue protein sequence, read N- to C-terminus: Holo-[acyl-carrier-protein] synthase (123 aa).

Asp8 and Glu60 together coordinate Mg(2+).

Belongs to the P-Pant transferase superfamily. AcpS family. Requires Mg(2+) as cofactor.

It is found in the cytoplasm. It catalyses the reaction apo-[ACP] + CoA = holo-[ACP] + adenosine 3',5'-bisphosphate + H(+). Functionally, transfers the 4'-phosphopantetheine moiety from coenzyme A to a Ser of acyl-carrier-protein. This Ehrlichia chaffeensis (strain ATCC CRL-10679 / Arkansas) protein is Holo-[acyl-carrier-protein] synthase.